Reading from the N-terminus, the 1178-residue chain is Pesticidal crystal protein Cry1Ac (1178 aa).

Belongs to the delta endotoxin family.

Promotes colloidosmotic lysis by binding to the midgut epithelial cells of many lepidopteran larvae. The polypeptide is Pesticidal crystal protein Cry1Ac (cry1Ac) (Bacillus thuringiensis subsp. kurstaki).